We begin with the raw amino-acid sequence, 121 residues long: Large ribosomal subunit protein bL17 (121 aa).

It belongs to the bacterial ribosomal protein bL17 family. In terms of assembly, part of the 50S ribosomal subunit. Contacts protein L32.

The protein is Large ribosomal subunit protein bL17 of Mycoplasmopsis agalactiae (strain NCTC 10123 / CIP 59.7 / PG2) (Mycoplasma agalactiae).